The chain runs to 263 residues: Hydroxyethylthiazole kinase 1 (263 aa).

Residue Met42 coordinates substrate. Lys118 and Thr164 together coordinate ATP. Gly191 serves as a coordination point for substrate.

It belongs to the Thz kinase family. It depends on Mg(2+) as a cofactor.

It catalyses the reaction 5-(2-hydroxyethyl)-4-methylthiazole + ATP = 4-methyl-5-(2-phosphooxyethyl)-thiazole + ADP + H(+). It functions in the pathway cofactor biosynthesis; thiamine diphosphate biosynthesis; 4-methyl-5-(2-phosphoethyl)-thiazole from 5-(2-hydroxyethyl)-4-methylthiazole: step 1/1. Its function is as follows. Catalyzes the phosphorylation of the hydroxyl group of 4-methyl-5-beta-hydroxyethylthiazole (THZ). This Clostridium botulinum (strain 657 / Type Ba4) protein is Hydroxyethylthiazole kinase 1.